Consider the following 324-residue polypeptide: Beta-ketoacyl-[acyl-carrier-protein] synthase III (324 aa).

Residues Cys-112 and His-249 contribute to the active site. An ACP-binding region spans residues 250–254; sequence QANDR. The active site involves Asn-279.

This sequence belongs to the thiolase-like superfamily. FabH family. Homodimer.

It localises to the cytoplasm. It carries out the reaction malonyl-[ACP] + acetyl-CoA + H(+) = 3-oxobutanoyl-[ACP] + CO2 + CoA. Its pathway is lipid metabolism; fatty acid biosynthesis. Its function is as follows. Catalyzes the condensation reaction of fatty acid synthesis by the addition to an acyl acceptor of two carbons from malonyl-ACP. Catalyzes the first condensation reaction which initiates fatty acid synthesis and may therefore play a role in governing the total rate of fatty acid production. Possesses both acetoacetyl-ACP synthase and acetyl transacylase activities. Its substrate specificity determines the biosynthesis of branched-chain and/or straight-chain of fatty acids. The chain is Beta-ketoacyl-[acyl-carrier-protein] synthase III from Streptococcus pneumoniae serotype 19F (strain G54).